The chain runs to 340 residues: Phosphoribosylformylglycinamidine cyclo-ligase (340 aa).

The protein belongs to the AIR synthase family.

It localises to the cytoplasm. It carries out the reaction 2-formamido-N(1)-(5-O-phospho-beta-D-ribosyl)acetamidine + ATP = 5-amino-1-(5-phospho-beta-D-ribosyl)imidazole + ADP + phosphate + H(+). Its pathway is purine metabolism; IMP biosynthesis via de novo pathway; 5-amino-1-(5-phospho-D-ribosyl)imidazole from N(2)-formyl-N(1)-(5-phospho-D-ribosyl)glycinamide: step 2/2. This is Phosphoribosylformylglycinamidine cyclo-ligase from Streptococcus sanguinis (strain SK36).